A 212-amino-acid polypeptide reads, in one-letter code: ATP synthase F(0) complex subunit a (212 aa).

6 helical membrane-spanning segments follow: residues 3-23 (MMGIPLILIAIFLPTLLIYTS), 58-78 (WAAMLMTLMIXLLSMNLLGLL), 87-107 (QLSMNMALAIPLWLATVLTGL), 128-148 (IPLLIIIETVSLFIRPLALGV), 169-189 (FVLLPMMTLTALSTFIVLVLL), and 192-212 (LEIAVAMIQAYVFTLLLTLYL).

It belongs to the ATPase A chain family. As to quaternary structure, component of the ATP synthase complex composed at least of ATP5F1A/subunit alpha, ATP5F1B/subunit beta, ATP5MC1/subunit c (homooctomer), MT-ATP6/subunit a, MT-ATP8/subunit 8, ATP5ME/subunit e, ATP5MF/subunit f, ATP5MG/subunit g, ATP5MK/subunit k, ATP5MJ/subunit j, ATP5F1C/subunit gamma, ATP5F1D/subunit delta, ATP5F1E/subunit epsilon, ATP5PF/subunit F6, ATP5PB/subunit b, ATP5PD/subunit d, ATP5PO/subunit OSCP. ATP synthase complex consists of a soluble F(1) head domain (subunits alpha(3) and beta(3)) - the catalytic core - and a membrane F(0) domain - the membrane proton channel (subunits c, a, 8, e, f, g, k and j). These two domains are linked by a central stalk (subunits gamma, delta, and epsilon) rotating inside the F1 region and a stationary peripheral stalk (subunits F6, b, d, and OSCP). Interacts with DNAJC30; interaction is direct.

It is found in the mitochondrion inner membrane. The enzyme catalyses H(+)(in) = H(+)(out). Subunit a, of the mitochondrial membrane ATP synthase complex (F(1)F(0) ATP synthase or Complex V) that produces ATP from ADP in the presence of a proton gradient across the membrane which is generated by electron transport complexes of the respiratory chain. ATP synthase complex consist of a soluble F(1) head domain - the catalytic core - and a membrane F(1) domain - the membrane proton channel. These two domains are linked by a central stalk rotating inside the F(1) region and a stationary peripheral stalk. During catalysis, ATP synthesis in the catalytic domain of F(1) is coupled via a rotary mechanism of the central stalk subunits to proton translocation. With the subunit c (ATP5MC1), forms the proton-conducting channel in the F(0) domain, that contains two crucial half-channels (inlet and outlet) that facilitate proton movement from the mitochondrial intermembrane space (IMS) into the matrix. Protons are taken up via the inlet half-channel and released through the outlet half-channel, following a Grotthuss mechanism. The polypeptide is ATP synthase F(0) complex subunit a (Tropidurus hispidus (Peters' lava lizard)).